We begin with the raw amino-acid sequence, 280 residues long: Probable endonuclease 4 (280 aa).

Zn(2+)-binding residues include His-69, His-109, Glu-145, Asp-179, His-182, His-216, Asp-229, His-231, and Glu-261.

Belongs to the AP endonuclease 2 family. It depends on Zn(2+) as a cofactor.

It catalyses the reaction Endonucleolytic cleavage to 5'-phosphooligonucleotide end-products.. In terms of biological role, endonuclease IV plays a role in DNA repair. It cleaves phosphodiester bonds at apurinic or apyrimidinic (AP) sites, generating a 3'-hydroxyl group and a 5'-terminal sugar phosphate. The protein is Probable endonuclease 4 of Pelodictyon phaeoclathratiforme (strain DSM 5477 / BU-1).